The sequence spans 651 residues: Beta-glucuronidase (651 aa).

The N-terminal stretch at 1–22 is a signal peptide; it reads MSRGPAGAWVALGPLLWTCGLA. 2 N-linked (GlcNAc...) asparagine glycosylation sites follow: N172 and N419. The active-site Proton donor is E450. N-linked (GlcNAc...) asparagine glycosylation is present at N630.

Belongs to the glycosyl hydrolase 2 family. Homotetramer.

Its subcellular location is the lysosome. The enzyme catalyses a beta-D-glucuronoside + H2O = D-glucuronate + an alcohol. With respect to regulation, inhibited by L-aspartic acid. In terms of biological role, plays an important role in the degradation of dermatan and keratan sulfates. This Canis lupus familiaris (Dog) protein is Beta-glucuronidase (GUSB).